The following is an 814-amino-acid chain: Cadherin-15 (814 aa).

Residues 1–21 (MDAAFLLVLGLLAQSLCLSLG) form the signal peptide. Residues 22-60 (VPGWRRPTTLYPWRRAPALSRVRRAWVIPPISVSENHKR) constitute a propeptide that is removed on maturation. Cadherin domains are found at residues 61-152 (LPYP…RPAF), 153-260 (LQEA…APEF), 261-375 (TRDE…PPVF), 376-481 (QENP…DHAP), and 482-590 (VLAP…VCLP). The Extracellular segment spans residues 61–606 (LPYPLVQIKS…AGGTGLSLGA (546 aa)). N-linked (GlcNAc...) asparagine glycosylation is present at asparagine 227. Residues asparagine 531, asparagine 538, and asparagine 576 are each glycosylated (N-linked (GlcNAc...) asparagine). A helical membrane pass occupies residues 607-626 (LVIVLASALLLLVLVLLVAL). Residues 627–814 (RARFWKQSRG…LLPRHRGRTA (188 aa)) are Cytoplasmic-facing. Disordered stretches follow at residues 636 to 663 (GKGL…GEED) and 676 to 703 (TALS…PPRV).

Expressed in the brain and cerebellum.

It is found in the cell membrane. Cadherins are calcium-dependent cell adhesion proteins. They preferentially interact with themselves in a homophilic manner in connecting cells; cadherins may thus contribute to the sorting of heterogeneous cell types. M-cadherin is part of the myogenic program and may provide a trigger for terminal muscle differentiation. This Homo sapiens (Human) protein is Cadherin-15 (CDH15).